The sequence spans 361 residues: G-protein coupled receptor 68 (361 aa).

At 1–12 the chain is on the extracellular side; sequence MGNITADNTSMN. N3 and N8 each carry an N-linked (GlcNAc...) asparagine glycan. The chain crosses the membrane as a helical span at residues 13–49; the sequence is CDIDHTIHQTLAPVVYVMVLVVGFPANCLSLYYGYLQ. Disulfide bonds link C13/C258 and C94/C172. The Cytoplasmic portion of the chain corresponds to 50–53; it reads IKAR. Residues 54–84 traverse the membrane as a helical segment; it reads NELGVYLCNLTVADLFYICSLPFWLQYVLQH. Residues 85-89 are Extracellular-facing; the sequence is DHWSH. The chain crosses the membrane as a helical span at residues 90–125; sequence DDLSCQVCGILLYENIYISVGFLCCISIDRYLAVAH. The Cytoplasmic portion of the chain corresponds to 126-133; the sequence is PFRFHQFR. Residues 134 to 160 form a helical membrane-spanning segment; the sequence is TLKAAMGVSALIWVKELLTSIYFLMHE. At 161–176 the chain is on the extracellular side; that stretch reads EVVEDADRHRVCFEHY. Positions 161–176 are extracellular loop 2 (ECL2); sequence EVVEDADRHRVCFEHY. The helical transmembrane segment at 177-214 threads the bilayer; that stretch reads PLEPRQRGINYYRFLVGFLFPICLLLASYRGILRAVRR. Residues 215–218 lie on the Cytoplasmic side of the membrane; that stretch reads SHGT. Residues 219 to 254 traverse the membrane as a helical segment; that stretch reads QKSRKDQIQRLVLSTVVIFLACFLPYHVLLLVRSLW. Residues 255–260 lie on the Extracellular side of the membrane; sequence ESSCDF. Residues 261–289 traverse the membrane as a helical segment; that stretch reads AKGIFNAYHFSLLLTSFNCVADPVLYCFV. Topologically, residues 290–361 are cytoplasmic; the sequence is SETTHRDLAR…MGGSPAGGLS (72 aa). A disordered region spans residues 340-361; it reads LHPAFQTPHPPGMGGSPAGGLS. Residues 351-361 show a composition bias toward gly residues; sequence GMGGSPAGGLS.

It belongs to the G-protein coupled receptor 1 family.

Its subcellular location is the cell membrane. Its activity is regulated as follows. Activated by a network of residues that connects an extracellular-facing cavity to Glu-149, a conserved charged residue buried in the transmembrane core of the receptor. Protonation likely drives conformational changes in extracellular loop 2 (ECL2), which stabilizes movement of transmembrane 3 (TM3) and a series of rearrangements that connect the extracellular-facing cavity to Glu-149, a residue only conserved in proton-sensing G-protein coupled receptors. Activated in an allosteric manner by divalent metal ions at the extracellular surface following the order: Cd(2+) &gt; Co(2+) &gt; Ni(2+) &gt; Zn(2+) &gt; Fe(2+) &gt; Ca(2+) &gt; Mg(2+). Proton-sensing G-protein coupled receptor activated by extracellular pH, which is required to monitor pH changes and generate adaptive reactions. The receptor is almost silent at pH 7.8 but fully activated at pH 6.8. Ligand binding causes a conformation change that triggers signaling via guanine nucleotide-binding proteins (G proteins) and modulates the activity of downstream effectors, such as phospholipase C. GPR68 is mainly coupled to G(q) G proteins and mediates production of diacylglycerol (DAG) and inositol 1,4,5-trisphosphate (IP3). Acts as a key mechanosensor of fluid shear stress and membrane stretch. Expressed in endothelial cells of small-diameter resistance arteries, where it mediates flow-induced dilation in response to shear stress. May represents an osteoblastic pH sensor regulating cell-mediated responses to acidosis in bone. Acts as a regulator of calcium-sensing receptor CASR in a seesaw manner: GPR68-mediated signaling inhibits CASR signaling in response to protons, while CASR inhibits GPR68 in presence of extracellular calcium. The protein is G-protein coupled receptor 68 (GPR68) of Bos taurus (Bovine).